The sequence spans 103 residues: UPF0473 protein LVIS_1220 (103 aa).

This sequence belongs to the UPF0473 family.

The protein is UPF0473 protein LVIS_1220 of Levilactobacillus brevis (strain ATCC 367 / BCRC 12310 / CIP 105137 / JCM 1170 / LMG 11437 / NCIMB 947 / NCTC 947) (Lactobacillus brevis).